The primary structure comprises 162 residues: NADH-quinone oxidoreductase subunit I (162 aa).

4Fe-4S ferredoxin-type domains are found at residues 53–83 and 93–122; these read LRRYPNGEERCIACKLCEAVCPALAITIESD and TRYDIDLTKCIFCGFCEESCPVDSIVETHI. The [4Fe-4S] cluster site is built by Cys63, Cys66, Cys69, Cys73, Cys102, Cys105, Cys108, and Cys112.

It belongs to the complex I 23 kDa subunit family. NDH-1 is composed of 14 different subunits. Subunits NuoA, H, J, K, L, M, N constitute the membrane sector of the complex. The cofactor is [4Fe-4S] cluster.

The protein localises to the cell inner membrane. The enzyme catalyses a quinone + NADH + 5 H(+)(in) = a quinol + NAD(+) + 4 H(+)(out). Functionally, NDH-1 shuttles electrons from NADH, via FMN and iron-sulfur (Fe-S) centers, to quinones in the respiratory chain. The immediate electron acceptor for the enzyme in this species is believed to be ubiquinone. Couples the redox reaction to proton translocation (for every two electrons transferred, four hydrogen ions are translocated across the cytoplasmic membrane), and thus conserves the redox energy in a proton gradient. The protein is NADH-quinone oxidoreductase subunit I of Bordetella avium (strain 197N).